The primary structure comprises 264 residues: Proteasome subunit beta type-4 (264 aa).

Residue methionine 1 is modified to N-acetylmethionine. Positions 1-45 are excised as a propeptide; it reads MEAFLGSRSGLWAGGPAPGQFYRIPSTPDSFMDPASALYRGPITR. Serine 26 is subject to Phosphoserine. Position 102 is a phosphotyrosine (tyrosine 102).

The protein belongs to the peptidase T1B family. The 26S proteasome consists of a 20S proteasome core and two 19S regulatory subunits. The 20S proteasome core is a barrel-shaped complex made of 28 subunits that are arranged in four stacked rings. The two outer rings are each formed by seven alpha subunits, and the two inner rings are formed by seven beta subunits. The proteolytic activity is exerted by three beta-subunits PSMB5, PSMB6 and PSMB7. Forms a ternary complex with SMAD1 and OAZ1 before PSMB4 is incorporated into the 20S proteasome. Interacts with PRPF19. As to quaternary structure, (Microbial infection) Interacts with HTLV-1 Tax protein. In terms of assembly, (Microbial infection) Interacts with HIV-1 Nef and Tat proteins.

The protein localises to the cytoplasm. The protein resides in the nucleus. In terms of biological role, non-catalytic component of the 20S core proteasome complex involved in the proteolytic degradation of most intracellular proteins. This complex plays numerous essential roles within the cell by associating with different regulatory particles. Associated with two 19S regulatory particles, forms the 26S proteasome and thus participates in the ATP-dependent degradation of ubiquitinated proteins. The 26S proteasome plays a key role in the maintenance of protein homeostasis by removing misfolded or damaged proteins that could impair cellular functions, and by removing proteins whose functions are no longer required. Associated with the PA200 or PA28, the 20S proteasome mediates ubiquitin-independent protein degradation. This type of proteolysis is required in several pathways including spermatogenesis (20S-PA200 complex) or generation of a subset of MHC class I-presented antigenic peptides (20S-PA28 complex). SMAD1/OAZ1/PSMB4 complex mediates the degradation of the CREBBP/EP300 repressor SNIP1. The protein is Proteasome subunit beta type-4 of Homo sapiens (Human).